Here is a 448-residue protein sequence, read N- to C-terminus: 5-hydroxytryptamine receptor 7 (448 aa).

The Extracellular portion of the chain corresponds to Met1–Val86. Asn5 and Asn69 each carry an N-linked (GlcNAc...) asparagine glycan. The chain crosses the membrane as a helical span at residues Ile87–Phe111. The Cytoplasmic segment spans residues Val112–Tyr121. The helical transmembrane segment at Leu122 to Val143 threads the bilayer. The Extracellular segment spans residues Thr144 to His155. A helical transmembrane segment spans residues Phe156 to Ile181. The cysteines at positions 158 and 234 are disulfide-linked. Asp165 serves as a coordination point for serotonin. Residues Asp182–Cys201 are Cytoplasmic-facing. The helical transmembrane segment at Met202–Phe222 threads the bilayer. Over Gly223–Phe240 the chain is Extracellular. Residues Gly241 to Tyr263 traverse the membrane as a helical segment. The Cytoplasmic portion of the chain corresponds to Gln264–Ala329. The helical transmembrane segment at Thr330 to Phe355 threads the bilayer. The Extracellular portion of the chain corresponds to Ile356–Leu366. Residues Trp367 to Phe390 form a helical membrane-spanning segment. The Cytoplasmic portion of the chain corresponds to Asn391–Thr448. Cys404 carries S-palmitoyl cysteine lipidation.

The protein belongs to the G-protein coupled receptor 1 family.

It localises to the cell membrane. In terms of biological role, G-protein coupled receptor for 5-hydroxytryptamine (serotonin), a biogenic hormone that functions as a neurotransmitter, a hormone and a mitogen. Ligand binding causes a conformation change that triggers signaling via guanine nucleotide-binding proteins (G proteins) and modulates the activity of downstream effectors. HTR7 is coupled to G(s) G alpha proteins and mediates activation of adenylate cyclase activity. In Mus musculus (Mouse), this protein is 5-hydroxytryptamine receptor 7 (Htr7).